The chain runs to 178 residues: MORN repeat-containing protein 5 (178 aa).

MORN repeat units follow at residues 8–30 (YDGD…THTR), 31–53 (YVGE…NGSK), and 54–75 (YEGT…DGLK).

The protein resides in the cell projection. The protein localises to the cilium. It localises to the flagellum. In Danio rerio (Zebrafish), this protein is MORN repeat-containing protein 5 (morn5).